The chain runs to 289 residues: ATP synthase gamma chain (289 aa).

This sequence belongs to the ATPase gamma chain family. F-type ATPases have 2 components, CF(1) - the catalytic core - and CF(0) - the membrane proton channel. CF(1) has five subunits: alpha(3), beta(3), gamma(1), delta(1), epsilon(1). CF(0) has three main subunits: a, b and c.

It is found in the cell inner membrane. In terms of biological role, produces ATP from ADP in the presence of a proton gradient across the membrane. The gamma chain is believed to be important in regulating ATPase activity and the flow of protons through the CF(0) complex. The sequence is that of ATP synthase gamma chain from Haemophilus influenzae (strain 86-028NP).